The sequence spans 431 residues: Adenylosuccinate synthetase (431 aa).

Residues 13–19 (GDEGKGK) and 41–43 (GHT) contribute to the GTP site. Asp14 (proton acceptor) is an active-site residue. Asp14 and Gly41 together coordinate Mg(2+). Residues 14–17 (DEGK), 39–42 (NAGH), Thr130, Arg144, Gln225, Thr240, and Arg304 contribute to the IMP site. His42 serves as the catalytic Proton donor. 300-306 (ATTGRKR) contacts substrate. Residues Arg306, 332–334 (KLD), and 415–417 (STG) contribute to the GTP site.

This sequence belongs to the adenylosuccinate synthetase family. In terms of assembly, homodimer. Mg(2+) serves as cofactor.

It is found in the cytoplasm. The catalysed reaction is IMP + L-aspartate + GTP = N(6)-(1,2-dicarboxyethyl)-AMP + GDP + phosphate + 2 H(+). It functions in the pathway purine metabolism; AMP biosynthesis via de novo pathway; AMP from IMP: step 1/2. Plays an important role in the de novo pathway of purine nucleotide biosynthesis. Catalyzes the first committed step in the biosynthesis of AMP from IMP. The protein is Adenylosuccinate synthetase of Shewanella loihica (strain ATCC BAA-1088 / PV-4).